The sequence spans 46 residues: L-amino-acid oxidase (46 aa).

N-linked (GlcNAc...) asparagine glycosylation is present at asparagine 31.

It belongs to the flavin monoamine oxidase family. FIG1 subfamily. FAD is required as a cofactor.

Its subcellular location is the secreted. It is found in the lysosome. The protein resides in the cytoplasmic vesicle. It localises to the secretory vesicle. The protein localises to the acrosome. The enzyme catalyses an L-alpha-amino acid + O2 + H2O = a 2-oxocarboxylate + H2O2 + NH4(+). It carries out the reaction L-tryptophan + O2 + H2O = indole-3-pyruvate + H2O2 + NH4(+). The catalysed reaction is L-phenylalanine + O2 + H2O = 3-phenylpyruvate + H2O2 + NH4(+). It catalyses the reaction L-tyrosine + O2 + H2O = 3-(4-hydroxyphenyl)pyruvate + H2O2 + NH4(+). The enzyme catalyses L-arginine + O2 + H2O = 5-guanidino-2-oxopentanoate + H2O2 + NH4(+). It participates in amino-acid degradation; L-tryptophan degradation via pyruvate pathway. Secreted L-amino-acid oxidase that acts as a key immunoregulator. Has preference for L-aromatic amino acids: converts phenylalanine (Phe), tyrosine (Tyr) and tryptophan (Trp) to phenylpyruvic acid (PP), hydroxyphenylpyruvic acid (HPP), and indole-3-pyruvic acid (I3P), respectively. Also has weak L-arginine oxidase activity. Acts as a negative regulator of anti-tumor immunity by mediating Trp degradation via an indole pyruvate pathway that activates the transcription factor AHR. IL4I1-mediated Trp catabolism generates I3P, giving rise to indole metabolites (indole-3-acetic acid (IAA) and indole-3-aldehyde (I3A)) and kynurenic acid, which act as ligands for AHR, a ligand-activated transcription factor that plays important roles in immunity and cancer. AHR activation by indoles following IL4I1-mediated Trp degradation enhances tumor progression by promoting cancer cell motility and suppressing adaptive immunity. Also has an immunoregulatory function in some immune cells, probably by mediating Trp degradation and promoting downstream AHR activation: inhibits T-cell activation and proliferation, promotes the differentiation of naive CD4(+) T-cells into FOXP3(+) regulatory T-cells (Treg) and regulates the development and function of B-cells. Also regulates M2 macrophage polarization by inhibiting T-cell activation. Also has antibacterial properties by inhibiting growth of Gram negative and Gram positive bacteria through the production of NH4(+) and H2O2. The polypeptide is L-amino-acid oxidase (Mus spretus (Western Mediterranean mouse)).